We begin with the raw amino-acid sequence, 487 residues long: MKALDELTFDNRFARLGDAFSTHVLPEPLDAPRLVVASPAAMALLDLDPSVAETPVFAELFGGHKLWAEAEPRAMVYSGHQFGGYTPQLGDGRGLLLGEVYNEAGEHWDLHLKGAGMTPYSRMGDGRAVLRSSIREFLASEALHALGIPSSRALCVIGSDTPVWREKQERGAMVLRMAHSHIRFGHFEYFYYTKKPEQQAELAEHVLNLHYPECREQPEPYLAMFREIVERNAELIAKWQAYGFCHGVMNTDNMSILGITFDFGPFAFLDDFDAHFICNHSDHEGRYSFSNQVPIGQWNLSALAQALTPFIGVDALKEALGLYLPLYQANYLDLMRRRLGLTTAEDDDQKLVERLLKLMQSSGVDYTLFFRRLGDEPAALAVTRLRDDFVDLAGFDAWAEQYKARVERDGDNSEEQRRARMHAVNPLYILRNYLAQNAIAAAESGDYSEVRRLHEVLSKPFEEQAGMEQYAQRPPDWGKHLEISCSS.

Positions 90, 92, 93, 113, 125, 126, 176, and 183 each coordinate ATP. Catalysis depends on Asp252, which acts as the Proton acceptor. Residues Asn253 and Asp262 each coordinate Mg(2+). Asp262 is a binding site for ATP.

This sequence belongs to the SELO family. Requires Mg(2+) as cofactor. Mn(2+) is required as a cofactor.

The catalysed reaction is L-seryl-[protein] + ATP = 3-O-(5'-adenylyl)-L-seryl-[protein] + diphosphate. It catalyses the reaction L-threonyl-[protein] + ATP = 3-O-(5'-adenylyl)-L-threonyl-[protein] + diphosphate. The enzyme catalyses L-tyrosyl-[protein] + ATP = O-(5'-adenylyl)-L-tyrosyl-[protein] + diphosphate. It carries out the reaction L-histidyl-[protein] + UTP = N(tele)-(5'-uridylyl)-L-histidyl-[protein] + diphosphate. The catalysed reaction is L-seryl-[protein] + UTP = O-(5'-uridylyl)-L-seryl-[protein] + diphosphate. It catalyses the reaction L-tyrosyl-[protein] + UTP = O-(5'-uridylyl)-L-tyrosyl-[protein] + diphosphate. Functionally, nucleotidyltransferase involved in the post-translational modification of proteins. It can catalyze the addition of adenosine monophosphate (AMP) or uridine monophosphate (UMP) to a protein, resulting in modifications known as AMPylation and UMPylation. This Pseudomonas fluorescens (strain SBW25) protein is Protein nucleotidyltransferase YdiU.